A 233-amino-acid chain; its full sequence is Putative T-box protein 41 (233 aa).

Residues 1 to 146 (MTVTRNGCRI…MNPHARHFLK (146 aa)) constitute a DNA-binding region (T-box).

The protein localises to the nucleus. This Caenorhabditis elegans protein is Putative T-box protein 41 (tbx-41).